The primary structure comprises 155 residues: SsrA-binding protein (155 aa).

This sequence belongs to the SmpB family.

The protein localises to the cytoplasm. Functionally, required for rescue of stalled ribosomes mediated by trans-translation. Binds to transfer-messenger RNA (tmRNA), required for stable association of tmRNA with ribosomes. tmRNA and SmpB together mimic tRNA shape, replacing the anticodon stem-loop with SmpB. tmRNA is encoded by the ssrA gene; the 2 termini fold to resemble tRNA(Ala) and it encodes a 'tag peptide', a short internal open reading frame. During trans-translation Ala-aminoacylated tmRNA acts like a tRNA, entering the A-site of stalled ribosomes, displacing the stalled mRNA. The ribosome then switches to translate the ORF on the tmRNA; the nascent peptide is terminated with the 'tag peptide' encoded by the tmRNA and targeted for degradation. The ribosome is freed to recommence translation, which seems to be the essential function of trans-translation. The sequence is that of SsrA-binding protein from Bacillus cereus (strain 03BB102).